Consider the following 887-residue polypeptide: Tiger protein O1 (887 aa).

Residues 1-21 form the signal peptide; sequence MEKKLLIIVIVFLFSTIQVFC. Over 22 to 845 the chain is Extracellular; it reads RIDDKTFVIS…SLSKKSIILL (824 aa). 24 N-linked (GlcNAc...) asparagine glycosylation sites follow: Asn32, Asn70, Asn186, Asn207, Asn219, Asn259, Asn297, Asn314, Asn325, Asn338, Asn354, Asn393, Asn431, Asn588, Asn629, Asn652, Asn687, Asn710, Asn720, Asn730, Asn775, Asn788, Asn811, and Asn816. An IPT/TIG 1 domain is found at 277-365; that stretch reads NSVPYSKGGL…TNENKLLFNY (89 aa). Residues 710 to 767 form the IPT/TIG 2 domain; it reads NTSSINVNGGNLTIYGKNFYNVSNIKVEVDNQLKCNKIEFINLNSLTCFLPPFIETLF. The tract at residues 811–835 is disordered; the sequence is NDTSENSTNDILNHEKNNNNQKDGS. Residues 846–866 traverse the membrane as a helical segment; sequence SILLPSFIILIVSLAIVILVI. The Cytoplasmic segment spans residues 867 to 887; the sequence is KRNKTKHSKNMSSKEKELMKQ.

Its subcellular location is the membrane. In Dictyostelium discoideum (Social amoeba), this protein is Tiger protein O1 (tgrO1).